Consider the following 375-residue polypeptide: MQKLAVYVYIYLFMQILVHPVALDGSSQPTENAEKDGLCNACTWRQNTKSSRIEAIKIQILSKLRLEQAPNISRDVIKQLLPKAPPLQELIDQYDVQRDDSSDGSLEDDDYHATTETIITMPTESDFLVQMEGKPKCCFFKFSSKIQYNKVVKAQLWIYLRQVQKPTTVFVQILRLIKPMKDGTRYTGIRSLKLDMNPGTGIWQSIDVKTVLQNWLKQPESNLGIEIKAFDENGRDLAVTFPGPGEDGLNPFLEVRVTDTPKRSRRDFGLDCDEHSTESRCCRYPLTVDFEAFGWDWIIAPKRYKANYCSGECEFVFLQKYPHTHLVHQANPRGSAGPCCTPTKMSPINMLYFNGKEQIIYGKIPAMVVDRCGCS.

A signal peptide spans 1 to 23 (MQKLAVYVYIYLFMQILVHPVAL). A propeptide spanning residues 24–266 (DGSSQPTENA…VTDTPKRSRR (243 aa)) is cleaved from the precursor. The N-linked (GlcNAc...) asparagine glycan is linked to Asn-71. Intrachain disulfides connect Cys-272–Cys-282, Cys-281–Cys-340, Cys-309–Cys-372, and Cys-313–Cys-374.

This sequence belongs to the TGF-beta family. Homodimer; disulfide-linked.

The protein localises to the secreted. Acts specifically as a negative regulator of skeletal muscle growth. In Meleagris gallopavo (Wild turkey), this protein is Growth/differentiation factor 8 (MSTN).